Consider the following 306-residue polypeptide: MPNPLYRQHIISISDLSREQLECLLQTALKLKAHPRGDLLEGKLIGSCFFEPSTRTRLSFETAVQCLGGKVIGFSDGANTSAKKGETLADTARIISGYTDAIIQRHPKDGAARVAAEFSRVPVINAGDGTNQHPSQTLLDLVTIYETQGRLDKLKIAMAGDLKYGRTVHSLCQALKRWGCEFAFVSPPSLAMPDYITEELDEAGCRYRILGSLEEAAEWADILYMTRVQRERFDEQEFAKIQGKFNLEASMLARAKPNLRVLHPLPRVDEIHPDVDATPHAYYFEQATNGVYARMAILSLVLNEEV.

Carbamoyl phosphate-binding residues include Arg-55 and Thr-56. Lys-84 lines the L-aspartate pocket. Residues Arg-105, His-133, and Gln-136 each contribute to the carbamoyl phosphate site. Residues Arg-166 and Arg-227 each contribute to the L-aspartate site. Positions 265 and 266 each coordinate carbamoyl phosphate.

It belongs to the aspartate/ornithine carbamoyltransferase superfamily. ATCase family. Heterododecamer (2C3:3R2) of six catalytic PyrB chains organized as two trimers (C3), and six regulatory PyrI chains organized as three dimers (R2).

It carries out the reaction carbamoyl phosphate + L-aspartate = N-carbamoyl-L-aspartate + phosphate + H(+). It participates in pyrimidine metabolism; UMP biosynthesis via de novo pathway; (S)-dihydroorotate from bicarbonate: step 2/3. Its function is as follows. Catalyzes the condensation of carbamoyl phosphate and aspartate to form carbamoyl aspartate and inorganic phosphate, the committed step in the de novo pyrimidine nucleotide biosynthesis pathway. In Neisseria meningitidis serogroup C (strain 053442), this protein is Aspartate carbamoyltransferase catalytic subunit.